The chain runs to 517 residues: FAD-dependent monooxygenase dmxR9 (517 aa).

Residues Val-96 and Arg-162 each coordinate FAD. Active-site residues include Arg-243 and Tyr-270. Residues Asp-365 and Ala-378 each contribute to the FAD site.

The protein belongs to the paxM FAD-dependent monooxygenase family. FAD is required as a cofactor.

Its pathway is secondary metabolite biosynthesis. Functionally, FAD-dependent monooxygenase; part of the gene cluster that mediates the biosynthesis of the dimeric xanthones cryptosporioptides. The pathway begins with the synthesis of atrochrysone thioester by the polyketide synthase dmx-nrPKS. The atrochrysone carboxyl ACP thioesterase dmxR1 then breaks the thioester bond and releases the atrochrysone carboxylic acid from dmx-nrPKS. Atrochrysone carboxylic acid is decarboxylated by the decarboxylase dmxR15, and oxidized by the anthrone oxygenase dmxR16 to yield emodin. Emodin is then reduced to emodin hydroquinone by the oxidoreductase dmxR7. A-ring reduction by the short chain dehydrogenase dmxR18, dehydration by the scytalone dehydratase-like protein dmxR17 and probable spontaneous re-oxidation, results in overall deoxygenation to chrysophanol. Baeyer-Villiger oxidation by the Baeyer-Villiger monooxygenase (BVMO) dmxR6 then yields monodictylactone in equilibrium with monodictyphenone. In the case of the cryptosporioptides biosynthesis, monodictylactone is reduced at C-12 to an alcohol (by the short chain dehydrogenases dmxR12 or dmxR8) and hydroxylated at C-5 by dmxR9, yielding the electron-rich aromatic which could eliminate H(2)O to form the ortho-quinonemethide, followed by tautomerisation to paraquinone and complete the formal reduction to produce the 10-methylgroup. Conjugate addition of C-4a-OH to the resulting paraquinone by the monooxygenase dmxR10 then gives cyclohexadienone, which is then reduced at C-5 by the short chain dehydrogenase dmxR3 to give the dihydroxanthone. The 6,7-epoxide in the cryptosporioptides could be introduced by the cytochrome P450 monooxygenase dmxL3. The highly reducing PKS dmxL2 manufactures butyrate, which is further carboxylated by dmxL1 to form ethylmalonate. It is not yet clear whether the carboxylation occurs while the butyrate is attached to the ACP of dmxL2, but this unusual fungal metabolite could then be esterified to O-5 by the O-acetyltransferase dmxR13. Finally, dimerization performed by dmxR5 gives the observed dimers cryptosporioptides A, B and C as the final products of the pathway. The polypeptide is FAD-dependent monooxygenase dmxR9 (Cryptosporiopsis sp. (strain 8999)).